A 1025-amino-acid chain; its full sequence is Multidrug resistance protein MdtC (1025 aa).

Transmembrane regions (helical) follow at residues 3 to 23, 333 to 353, 360 to 380, 387 to 407, 431 to 451, 463 to 483, 528 to 548, 853 to 873, 875 to 895, 897 to 917, 953 to 973, and 984 to 1004; these read FFAL…AITL, EVEQ…FLFL, IIPA…MYLC, LSLM…IVVL, VGFT…PLLL, FAVT…TLTP, LVGV…ISIP, VILI…LYES, VHPL…LLAL, LFNA…IGIV, PIMM…LSGG, and ITIV…TPVV.

Belongs to the resistance-nodulation-cell division (RND) (TC 2.A.6) family. MdtC subfamily. In terms of assembly, part of a tripartite efflux system composed of MdtA, MdtB and MdtC. MdtC forms a heteromultimer with MdtB.

It localises to the cell inner membrane. In terms of biological role, the MdtABC tripartite complex confers resistance against novobiocin and deoxycholate. The chain is Multidrug resistance protein MdtC from Escherichia coli O7:K1 (strain IAI39 / ExPEC).